Consider the following 525-residue polypeptide: GMP synthase [glutamine-hydrolyzing] (525 aa).

Residues 16–205 (PVLVVDFGAQ…LHDFAGLGAD (190 aa)) enclose the Glutamine amidotransferase type-1 domain. C93 serves as the catalytic Nucleophile. Residues H179 and E181 contribute to the active site. Residues 206–399 (WTAANIAGVL…LGLPEEIVAR (194 aa)) enclose the GMPS ATP-PPase domain. 233–239 (SGGVDSA) lines the ATP pocket.

As to quaternary structure, homodimer.

It carries out the reaction XMP + L-glutamine + ATP + H2O = GMP + L-glutamate + AMP + diphosphate + 2 H(+). It functions in the pathway purine metabolism; GMP biosynthesis; GMP from XMP (L-Gln route): step 1/1. Its function is as follows. Catalyzes the synthesis of GMP from XMP. This Mycolicibacterium paratuberculosis (strain ATCC BAA-968 / K-10) (Mycobacterium paratuberculosis) protein is GMP synthase [glutamine-hydrolyzing].